The primary structure comprises 415 residues: Multidrug resistance protein MdtA (415 aa).

An N-terminal signal peptide occupies residues 1-21 (MKGSYKSRWVIVIVVVIAAIA). Residues 31–47 (DSQSAAPGATKQAQQSP) show a composition bias toward polar residues. Disordered regions lie at residues 31–60 (DSQS…GPLA) and 392–415 (EAQS…GARS). Basic and acidic residues predominate over residues 399-415 (SEEKATSREYAKKGARS).

The protein belongs to the membrane fusion protein (MFP) (TC 8.A.1) family. In terms of assembly, part of a tripartite efflux system composed of MdtA, MdtB and MdtC.

Its subcellular location is the cell inner membrane. The MdtABC tripartite complex confers resistance against novobiocin and deoxycholate. The chain is Multidrug resistance protein MdtA from Escherichia coli O139:H28 (strain E24377A / ETEC).